A 217-amino-acid chain; its full sequence is Large ribosomal subunit protein uL3 (217 aa).

The tract at residues 129–161 (SRGPMSHGSKNHRAPGSTGAGTTPGRIYPGKRM) is disordered. Residues 142–153 (APGSTGAGTTPG) are compositionally biased toward low complexity.

This sequence belongs to the universal ribosomal protein uL3 family. Part of the 50S ribosomal subunit. Forms a cluster with proteins L14 and L19.

One of the primary rRNA binding proteins, it binds directly near the 3'-end of the 23S rRNA, where it nucleates assembly of the 50S subunit. The protein is Large ribosomal subunit protein uL3 of Prochlorococcus marinus (strain MIT 9515).